A 520-amino-acid chain; its full sequence is Dynein axonemal assembly factor 8 (520 aa).

Disordered regions lie at residues 93-202, 217-256, 328-366, and 388-520; these read PVLV…LRQE, RDAC…EGPP, CARK…QLAQ, and DHLS…LEQL. Basic and acidic residues predominate over residues 111 to 125; sequence RTKDASSQEGRDPGR. Position 161 is a phosphoserine (Ser-161). Ser-351 is subject to Phosphoserine. Residues 401–410 show a composition bias toward acidic residues; the sequence is DSEEEEEEEM. Residues 420-437 are compositionally biased toward polar residues; it reads SPSSLGLRTCTGKSQLLQ.

Expressed in respiratory ciliated cells (at protein level).

It is found in the dynein axonemal particle. The protein localises to the cytoplasm. In terms of biological role, in cyliated cells, dynein axonemal particle-specific protein required for deployment of ODA to the axoneme. Interacts with outer dynein arm (ODA) subunits. The sequence is that of Dynein axonemal assembly factor 8 from Homo sapiens (Human).